Here is a 156-residue protein sequence, read N- to C-terminus: Cyanate hydratase (156 aa).

Active-site residues include arginine 96, glutamate 99, and serine 122.

This sequence belongs to the cyanase family.

The catalysed reaction is cyanate + hydrogencarbonate + 3 H(+) = NH4(+) + 2 CO2. Catalyzes the reaction of cyanate with bicarbonate to produce ammonia and carbon dioxide. In Pseudomonas aeruginosa (strain LESB58), this protein is Cyanate hydratase.